A 139-amino-acid polypeptide reads, in one-letter code: Ribulose bisphosphate carboxylase small subunit (139 aa).

The protein belongs to the RuBisCO small chain family. As to quaternary structure, heterohexadecamer of 8 large and 8 small subunits.

It is found in the plastid. Its subcellular location is the chloroplast. Functionally, ruBisCO catalyzes two reactions: the carboxylation of D-ribulose 1,5-bisphosphate, the primary event in carbon dioxide fixation, as well as the oxidative fragmentation of the pentose substrate in the photorespiration process. Both reactions occur simultaneously and in competition at the same active site. Although the small subunit is not catalytic it is essential for maximal activity. In Guillardia theta (Cryptophyte), this protein is Ribulose bisphosphate carboxylase small subunit.